The primary structure comprises 289 residues: MLRDLFVKKKKYAAIPSEQVRKDVPDGVMTKCPKCKKIMYTKEVLKNLKVCVNCGYHHPMNAWERLDSILDEGSFREYDKEMVSLNPLEFPNYEEKLESDRKKTELNEAVVTGEGTIDDMLVVVAVMDSRFRMGSMGSVVGEKIARAVEKAYDLQVPFIIFTASGGARMQEGILSLMQMAKTSVALKKHSNAGGLFISVMTHPTTGGVSASFASLGDYNLAEPGALIGFAGRRVIEQTVREKLPEDFQTAEFLLEHGQLDAVVHRDDMRESLRKILEVHQGGEMAVWQS.

In terms of domain architecture, CoA carboxyltransferase N-terminal spans 28–289 (VMTKCPKCKK…QGGEMAVWQS (262 aa)). 4 residues coordinate Zn(2+): Cys32, Cys35, Cys51, and Cys54. The C4-type zinc finger occupies 32 to 54 (CPKCKKIMYTKEVLKNLKVCVNC).

The protein belongs to the AccD/PCCB family. Acetyl-CoA carboxylase is a heterohexamer composed of biotin carboxyl carrier protein (AccB), biotin carboxylase (AccC) and two subunits each of ACCase subunit alpha (AccA) and ACCase subunit beta (AccD). Requires Zn(2+) as cofactor.

It localises to the cytoplasm. The catalysed reaction is N(6)-carboxybiotinyl-L-lysyl-[protein] + acetyl-CoA = N(6)-biotinyl-L-lysyl-[protein] + malonyl-CoA. It functions in the pathway lipid metabolism; malonyl-CoA biosynthesis; malonyl-CoA from acetyl-CoA: step 1/1. Functionally, component of the acetyl coenzyme A carboxylase (ACC) complex. Biotin carboxylase (BC) catalyzes the carboxylation of biotin on its carrier protein (BCCP) and then the CO(2) group is transferred by the transcarboxylase to acetyl-CoA to form malonyl-CoA. The chain is Acetyl-coenzyme A carboxylase carboxyl transferase subunit beta from Bacillus anthracis (strain A0248).